Reading from the N-terminus, the 297-residue chain is MVRVRIPATSANLGPGFDCLGMALSLYNVVQIEAADSFQIALKGDYTAGIPGDETNLVWQSMCNLWEAIGFEIPTVSLELENNIPPTRGMGSSSAAIVGGLVAANEYAGGVLSKQQILQIANRIEGHPDNVAPALLGGVTLAVTAEASVIARTVHSQPQFMALAIVPDFYLSTEKSRNVLPASISRADAVYNLSRTALLVEALIHENYELLKEGMQDRLHQNQRASLVPGLGETLQVALDSGAYGSALSGSGPTILALVSSHRAEQVSQAMVDSLAAHGLTAKAYLLSVDSEGAAVI.

Residue 85–95 (PPTRGMGSSSA) coordinates ATP.

The protein belongs to the GHMP kinase family. Homoserine kinase subfamily.

Its subcellular location is the cytoplasm. It carries out the reaction L-homoserine + ATP = O-phospho-L-homoserine + ADP + H(+). It participates in amino-acid biosynthesis; L-threonine biosynthesis; L-threonine from L-aspartate: step 4/5. Its function is as follows. Catalyzes the ATP-dependent phosphorylation of L-homoserine to L-homoserine phosphate. This is Homoserine kinase from Desulfitobacterium hafniense (strain DSM 10664 / DCB-2).